The sequence spans 445 residues: Tubulin beta-2A chain (445 aa).

An MREI motif motif is present at residues M1–I4. Q11 contacts GTP. Phosphoserine is present on S40. Residue K58 is modified to N6-acetyllysine; alternate. Position 58 is an N6-succinyllysine; alternate (K58). K58 is covalently cross-linked (Glycyl lysine isopeptide (Lys-Gly) (interchain with G-Cter in ubiquitin); alternate). GTP-binding residues include E69, S138, G142, T143, and G144. E69 is a Mg(2+) binding site. Residue S172 is modified to Phosphoserine; by CDK1. Positions 204 and 226 each coordinate GTP. Phosphothreonine is present on residues T285 and T290. The residue at position 318 (R318) is an Omega-N-methylarginine. Residue K324 forms a Glycyl lysine isopeptide (Lys-Gly) (interchain with G-Cter in ubiquitin) linkage. The disordered stretch occupies residues Y422 to A445. The span at T429–A445 shows a compositional bias: acidic residues. E438 is modified (5-glutamyl polyglutamate).

The protein belongs to the tubulin family. In terms of assembly, interacts with ZNRF1. Part of a complex composed at least of ASH2L, EMSY, HCFC1, HSPA8, CCAR2, MATR3, MKI67, RBBP5, TUBB2A, WDR5 and ZNF335; this complex may have a histone H3-specific methyltransferase activity. Dimer of alpha and beta chains. A typical microtubule is a hollow water-filled tube with an outer diameter of 25 nm and an inner diameter of 15 nM. Alpha-beta heterodimers associate head-to-tail to form protofilaments running lengthwise along the microtubule wall with the beta-tubulin subunit facing the microtubule plus end conferring a structural polarity. Microtubules usually have 13 protofilaments but different protofilament numbers can be found in some organisms and specialized cells. Mg(2+) is required as a cofactor. In terms of processing, some glutamate residues at the C-terminus are polyglutamylated, resulting in polyglutamate chains on the gamma-carboxyl group. Polyglutamylation plays a key role in microtubule severing by spastin (SPAST). SPAST preferentially recognizes and acts on microtubules decorated with short polyglutamate tails: severing activity by SPAST increases as the number of glutamates per tubulin rises from one to eight, but decreases beyond this glutamylation threshold. Glutamylation is also involved in cilia motility. Some glutamate residues at the C-terminus are monoglycylated but not polyglycylated due to the absence of functional TTLL10 in human. Monoglycylation is mainly limited to tubulin incorporated into cilia and flagella axonemes, which is required for their stability and maintenance. Flagella glycylation controls sperm motility. Both polyglutamylation and monoglycylation can coexist on the same protein on adjacent residues, and lowering glycylation levels increases polyglutamylation, and reciprocally. Post-translationally, phosphorylated on Ser-172 by CDK1 during the cell cycle, from metaphase to telophase, but not in interphase. This phosphorylation inhibits tubulin incorporation into microtubules. As to expression, high expression in brain, where it represents 30% of all beta-tubulins.

The protein resides in the cytoplasm. It localises to the cytoskeleton. Tubulin is the major constituent of microtubules, a cylinder consisting of laterally associated linear protofilaments composed of alpha- and beta-tubulin heterodimers. Microtubules grow by the addition of GTP-tubulin dimers to the microtubule end, where a stabilizing cap forms. Below the cap, tubulin dimers are in GDP-bound state, owing to GTPase activity of alpha-tubulin. This Homo sapiens (Human) protein is Tubulin beta-2A chain (TUBB2A).